The primary structure comprises 271 residues: 4-hydroxy-tetrahydrodipicolinate reductase (271 aa).

NAD(+)-binding positions include 11 to 16, Glu37, 102 to 104, and 126 to 129; these read GAAGRM, GTT, and AGNM. Residue His159 is the Proton donor/acceptor of the active site. Residue His160 participates in (S)-2,3,4,5-tetrahydrodipicolinate binding. Lys163 functions as the Proton donor in the catalytic mechanism. 169–170 contributes to the (S)-2,3,4,5-tetrahydrodipicolinate binding site; sequence GT.

Belongs to the DapB family.

The protein localises to the cytoplasm. It carries out the reaction (S)-2,3,4,5-tetrahydrodipicolinate + NAD(+) + H2O = (2S,4S)-4-hydroxy-2,3,4,5-tetrahydrodipicolinate + NADH + H(+). It catalyses the reaction (S)-2,3,4,5-tetrahydrodipicolinate + NADP(+) + H2O = (2S,4S)-4-hydroxy-2,3,4,5-tetrahydrodipicolinate + NADPH + H(+). The protein operates within amino-acid biosynthesis; L-lysine biosynthesis via DAP pathway; (S)-tetrahydrodipicolinate from L-aspartate: step 4/4. Catalyzes the conversion of 4-hydroxy-tetrahydrodipicolinate (HTPA) to tetrahydrodipicolinate. This is 4-hydroxy-tetrahydrodipicolinate reductase from Parvibaculum lavamentivorans (strain DS-1 / DSM 13023 / NCIMB 13966).